The chain runs to 194 residues: Large ribosomal subunit protein eL15 (194 aa).

Positions 162–194 (LTSAGRKSRGLRNKGKGAEKVRPSVRANKGKTK) are disordered. Residues 167–176 (RKSRGLRNKG) show a composition bias toward basic residues.

It belongs to the eukaryotic ribosomal protein eL15 family.

The sequence is that of Large ribosomal subunit protein eL15 from Thermococcus onnurineus (strain NA1).